The primary structure comprises 637 residues: tRNA uridine 5-carboxymethylaminomethyl modification enzyme MnmG (637 aa).

Glycine 18–glycine 23 contributes to the FAD binding site. Position 281 to 295 (glycine 281 to phenylalanine 295) interacts with NAD(+).

Belongs to the MnmG family. In terms of assembly, homodimer. Heterotetramer of two MnmE and two MnmG subunits. FAD serves as cofactor.

The protein localises to the cytoplasm. Functionally, NAD-binding protein involved in the addition of a carboxymethylaminomethyl (cmnm) group at the wobble position (U34) of certain tRNAs, forming tRNA-cmnm(5)s(2)U34. The chain is tRNA uridine 5-carboxymethylaminomethyl modification enzyme MnmG from Ligilactobacillus salivarius (strain UCC118) (Lactobacillus salivarius).